Consider the following 103-residue polypeptide: Protamine-2 (103 aa).

The segment at 1–103 is disordered; sequence MVRYRMRSLS…RTRRRRCRRH (103 aa). Ser-8 and Ser-10 each carry phosphoserine. Basic and acidic residues predominate over residues 8–17; the sequence is SLSERPHEVH. Over residues 18–29 the composition is skewed to low complexity; sequence GQQVHGQDQGHN. The span at 48–103 shows a compositional bias: basic residues; it reads HRGHSHHRRRRCSRRRLHRIHRRRHRSCRRRRRRSCRHRRRHRRGCRTRRRRCRRH.

The protein belongs to the protamine P2 family. Interacts with TDRP. Proteolytic processing into mature chains is required for histone eviction during spermatogenesis. Transition proteins (TNP1 and TNP2) are required for processing. In terms of tissue distribution, testis.

The protein resides in the nucleus. Its subcellular location is the chromosome. In terms of biological role, protamines substitute for histones in the chromatin of sperm during the haploid phase of spermatogenesis. They compact sperm DNA into a highly condensed, stable and inactive complex. The chain is Protamine-2 (PRM2) from Macaca nemestrina (Pig-tailed macaque).